Reading from the N-terminus, the 136-residue chain is DNA-directed RNA polymerase subunit omega (136 aa).

The segment covering 90 to 102 (SSPAAAAVAPQSS) has biased composition (low complexity). Residues 90–136 (SSPAAAAVAPQSSSDDKDVQFDRMSEEDLLRGLENLAPPTETDDEGE) form a disordered region. Over residues 103–120 (SDDKDVQFDRMSEEDLLR) the composition is skewed to basic and acidic residues.

Belongs to the RNA polymerase subunit omega family. The RNAP catalytic core consists of 2 alpha, 1 beta, 1 beta' and 1 omega subunit. When a sigma factor is associated with the core the holoenzyme is formed, which can initiate transcription.

The catalysed reaction is RNA(n) + a ribonucleoside 5'-triphosphate = RNA(n+1) + diphosphate. Its function is as follows. Promotes RNA polymerase assembly. Latches the N- and C-terminal regions of the beta' subunit thereby facilitating its interaction with the beta and alpha subunits. This chain is DNA-directed RNA polymerase subunit omega, found in Methylorubrum populi (strain ATCC BAA-705 / NCIMB 13946 / BJ001) (Methylobacterium populi).